Reading from the N-terminus, the 244-residue chain is Adenosylcobinamide-GDP ribazoletransferase (244 aa).

Transmembrane regions (helical) follow at residues 33-53 (WFAVVGLLVGALVAALGWLGA), 57-77 (PWLAALLMLVTWVWVTGGLHL), 109-129 (FAVITLALQLLAKLVLLMLAV), 132-152 (GVGWSALVLLPAWARLGAVWW), and 176-196 (FWLSWLLLAALSAWLAPVLLL).

The protein belongs to the CobS family. It depends on Mg(2+) as a cofactor.

Its subcellular location is the cell inner membrane. It carries out the reaction alpha-ribazole + adenosylcob(III)inamide-GDP = adenosylcob(III)alamin + GMP + H(+). The enzyme catalyses alpha-ribazole 5'-phosphate + adenosylcob(III)inamide-GDP = adenosylcob(III)alamin 5'-phosphate + GMP + H(+). Its pathway is cofactor biosynthesis; adenosylcobalamin biosynthesis; adenosylcobalamin from cob(II)yrinate a,c-diamide: step 7/7. Functionally, joins adenosylcobinamide-GDP and alpha-ribazole to generate adenosylcobalamin (Ado-cobalamin). Also synthesizes adenosylcobalamin 5'-phosphate from adenosylcobinamide-GDP and alpha-ribazole 5'-phosphate. The sequence is that of Adenosylcobinamide-GDP ribazoletransferase from Laribacter hongkongensis (strain HLHK9).